A 304-amino-acid chain; its full sequence is m7GpppX diphosphatase (304 aa).

Substrate contacts are provided by residues Glu152, Lys174, and 235 to 246 (HYLPSYYHLHVH). A Histidine triad motif motif is present at residues 242–246 (HLHVH). His244 serves as the catalytic Nucleophile.

This sequence belongs to the HIT family.

Its subcellular location is the cytoplasm. The protein resides in the nucleus. It carries out the reaction a 5'-end (N(7)-methyl 5'-triphosphoguanosine)-ribonucleoside in mRNA + H2O = N(7)-methyl-GMP + a 5'-end diphospho-ribonucleoside in mRNA + 2 H(+). Its function is as follows. Decapping scavenger enzyme that catalyzes the cleavage of a residual cap structure following the degradation of mRNAs by the 3'-&gt;5' exosome-mediated mRNA decay pathway. Hydrolyzes cap analog structures like 7-methylguanosine nucleoside triphosphate (m7GpppG) with up to 10 nucleotide substrates (small capped oligoribonucleotides) and specifically releases 5'-phosphorylated RNA fragments and 7-methylguanosine monophosphate (m7GMP). Has no activity towards mRNA molecules longer than 25 nucleotides. May also play a role in the 5'-&gt;3 mRNA decay pathway; m7GDP, the downstream product released by the 5'-&gt;3' mRNA mediated decapping activity, may be also converted by DCS1 to m7GMP. Inhibits mRNA translation. Binds to the m7GpppG cap analog. The protein is m7GpppX diphosphatase (nhm1) of Schizosaccharomyces pombe (strain 972 / ATCC 24843) (Fission yeast).